A 217-amino-acid polypeptide reads, in one-letter code: Probable GTP-binding protein EngB (217 aa).

The region spanning 29 to 213 is the EngB-type G domain; sequence GPPEVAFAGR…RQAIAETVGI (185 aa). Residues 37–44, 64–68, 91–94, 158–161, and 192–194 contribute to the GTP site; these read GRSNVGKS, GRTQE, DMPG, TKTD, and TSS. Mg(2+)-binding residues include S44 and T66.

Belongs to the TRAFAC class TrmE-Era-EngA-EngB-Septin-like GTPase superfamily. EngB GTPase family. Requires Mg(2+) as cofactor.

Its function is as follows. Necessary for normal cell division and for the maintenance of normal septation. The polypeptide is Probable GTP-binding protein EngB (Rhizobium etli (strain ATCC 51251 / DSM 11541 / JCM 21823 / NBRC 15573 / CFN 42)).